The primary structure comprises 243 residues: Tyrosine recombinase XerD-like (243 aa).

In terms of domain architecture, Core-binding (CB) spans 1-72 (MKQAIESFIQ…AVNQFLYFLY (72 aa)). The Tyr recombinase domain maps to 91–243 (SVKKKLERED…KTSMSLEKFR (153 aa)). Active-site residues include lysine 149 and arginine 210.

Belongs to the 'phage' integrase family. XerD-like subfamily.

Its subcellular location is the cytoplasm. Its function is as follows. Putative tyrosine recombinase. Not involved in the cutting and rejoining of the recombining DNA molecules on dif(SL) site. The protein is Tyrosine recombinase XerD-like of Streptococcus suis (strain 98HAH33).